The primary structure comprises 695 residues: UvrABC system protein C (695 aa).

Basic and acidic residues predominate over residues 1–10 (MNHDPAETRD). Residues 1–44 (MNHDPAETRDTAAAPLADTESPSPVSPELTPHPAPAAQDIDTAT) form a disordered region. One can recognise a GIY-YIG domain in the interval 88–166 (TSPGVYRMLN…IKQLRPRFNV (79 aa)). Residues 276 to 311 (RAVKQELAVEMEKASNELEFETAALYRDRLAALSAI) form the UVR domain.

It belongs to the UvrC family. Interacts with UvrB in an incision complex.

It localises to the cytoplasm. Its function is as follows. The UvrABC repair system catalyzes the recognition and processing of DNA lesions. UvrC both incises the 5' and 3' sides of the lesion. The N-terminal half is responsible for the 3' incision and the C-terminal half is responsible for the 5' incision. This Rhodopseudomonas palustris (strain HaA2) protein is UvrABC system protein C.